A 188-amino-acid polypeptide reads, in one-letter code: Putative manganese efflux pump MntP (188 aa).

6 consecutive transmembrane segments (helical) span residues 3 to 23, 35 to 55, 63 to 83, 104 to 126, 140 to 160, and 167 to 187; these read FYAL…VALA, IAAT…AGWV, FISE…GLKM, WMTV…GLAF, MATT…GVLF, and AGGL…LGLI.

This sequence belongs to the MntP (TC 9.B.29) family.

It is found in the cell inner membrane. Functionally, probably functions as a manganese efflux pump. The polypeptide is Putative manganese efflux pump MntP (Neisseria meningitidis serogroup B (strain ATCC BAA-335 / MC58)).